Here is a 232-residue protein sequence, read N- to C-terminus: Phosphatidylserine decarboxylase proenzyme (232 aa).

Ser-190 functions as the Schiff-base intermediate with substrate; via pyruvic acid in the catalytic mechanism. Ser-190 is modified (pyruvic acid (Ser); by autocatalysis).

This sequence belongs to the phosphatidylserine decarboxylase family. PSD-A subfamily. As to quaternary structure, heterodimer of a large membrane-associated beta subunit and a small pyruvoyl-containing alpha subunit. Requires pyruvate as cofactor. In terms of processing, is synthesized initially as an inactive proenzyme. Formation of the active enzyme involves a self-maturation process in which the active site pyruvoyl group is generated from an internal serine residue via an autocatalytic post-translational modification. Two non-identical subunits are generated from the proenzyme in this reaction, and the pyruvate is formed at the N-terminus of the alpha chain, which is derived from the carboxyl end of the proenzyme. The post-translation cleavage follows an unusual pathway, termed non-hydrolytic serinolysis, in which the side chain hydroxyl group of the serine supplies its oxygen atom to form the C-terminus of the beta chain, while the remainder of the serine residue undergoes an oxidative deamination to produce ammonia and the pyruvoyl prosthetic group on the alpha chain.

It is found in the cell membrane. It carries out the reaction a 1,2-diacyl-sn-glycero-3-phospho-L-serine + H(+) = a 1,2-diacyl-sn-glycero-3-phosphoethanolamine + CO2. It functions in the pathway phospholipid metabolism; phosphatidylethanolamine biosynthesis; phosphatidylethanolamine from CDP-diacylglycerol: step 2/2. In terms of biological role, catalyzes the formation of phosphatidylethanolamine (PtdEtn) from phosphatidylserine (PtdSer). The sequence is that of Phosphatidylserine decarboxylase proenzyme from Rhodopseudomonas palustris (strain ATCC BAA-98 / CGA009).